Consider the following 232-residue polypeptide: DOA4-independent degradation protein 4 (232 aa).

The stretch at 14 to 97 forms a coiled coil; the sequence is PQERLKKNQR…AISLRIQAVR (84 aa). An interaction with VPS4 region spans residues 183–232; sequence LQSTPQNLVSNAPIAETAMGIPEPIGAGSEFHGNPDDDLQARLNTLKKQT. Residues 203–232 form a disordered region; the sequence is IPEPIGAGSEFHGNPDDDLQARLNTLKKQT. The short motif at 219–229 is the MIT-interacting motif element; it reads DDLQARLNTLK.

It belongs to the SNF7 family. In terms of assembly, core component of the ESCRT-III complex (endosomal sorting required for transport complex III). ESCRT-III appears to be sequentially assembled as a flat lattice on the endosome membrane and forms a transient 450 kDa complex that contains DID4, oligomerized SNF7, VPS20 and VPS24. SNF7 oligomerization into a membrane-associated filament is nucleated by association of SNF7 with VPS20; the process is terminated through association of VPS24, possibly by capping the SNF7 filament. VPS24 subsequently associates with DID4/VPS2.

Its subcellular location is the cytoplasm. The protein localises to the endosome membrane. Its function is as follows. Required for the sorting and concentration of proteins resulting in the entry of these proteins into the invaginating vesicles of the multivesicular body (MVB). Acts a component of the ESCRT-III complex, which appears to be critical for late steps in MVB sorting, such as membrane invagination and final cargo sorting and recruitment of late-acting components of the sorting machinery. The MVB pathway requires the sequential function of ESCRT-O, -I,-II and -III complex assemblies. Can directly stimulate VPS4 ATPase activity. The DID4/VPS2-VPS24 subcomplex is required for the VPS4-dependent dissociation of ESCRT-III. This is DOA4-independent degradation protein 4 (DID4) from Saccharomyces cerevisiae (strain ATCC 204508 / S288c) (Baker's yeast).